Here is a 427-residue protein sequence, read N- to C-terminus: Adenylosuccinate synthetase (427 aa).

Residues 12–18 and 40–42 contribute to the GTP site; these read GDEGKGK and GHT. The active-site Proton acceptor is Asp13. Residues Asp13 and Gly40 each contribute to the Mg(2+) site. IMP contacts are provided by residues 13-16, 38-41, Thr130, Arg144, Gln224, Thr239, and Arg303; these read DEGK and NAGH. His41 functions as the Proton donor in the catalytic mechanism. Residue 299–305 coordinates substrate; it reads SVTGRPR. Residues Arg305, 331–333, and 411–413 contribute to the GTP site; these read KLD and SVG.

This sequence belongs to the adenylosuccinate synthetase family. In terms of assembly, homodimer. The cofactor is Mg(2+).

The protein resides in the cytoplasm. It carries out the reaction IMP + L-aspartate + GTP = N(6)-(1,2-dicarboxyethyl)-AMP + GDP + phosphate + 2 H(+). It functions in the pathway purine metabolism; AMP biosynthesis via de novo pathway; AMP from IMP: step 1/2. Functionally, plays an important role in the de novo pathway of purine nucleotide biosynthesis. Catalyzes the first committed step in the biosynthesis of AMP from IMP. This Sorangium cellulosum (strain So ce56) (Polyangium cellulosum (strain So ce56)) protein is Adenylosuccinate synthetase.